The sequence spans 348 residues: MEKRIFTEEMVETEVKHQPKQEFSNADIQLDEEPKAVKAELIIEESLKPSRFWLRLFLAALALFGIATIAQSVQWLIDTWQANQWIYFAFAVAFFGISLAGVGAIINEWRKLRWLRKHHYHQQVSQQLLLETADTSGEKAREFCKSVVKNLAQTPMVQQVEQRWQSQLDEAYNSKEVLYLFSENVLSPIDNQVKKLISKNAAENAIIVAVSPLALVDILMVAWRNIALVNKITKAYGMELGYISRLKLFRMVMTNMVFAGATEIASDVGLDFFSQNLTARLSVRAAQGIGMGLLTARLGIKAMEFCRPVVFQQNERPKLSVVRQELIGVLKEQMFSKSREEFEFFHNN.

Helical transmembrane passes span 57-77 (FLAA…QWLI), 86-106 (IYFA…GAII), and 203-223 (ENAI…MVAW).

The protein belongs to the UPF0283 family.

It localises to the cell inner membrane. This chain is UPF0283 membrane protein HAPS_0079, found in Glaesserella parasuis serovar 5 (strain SH0165) (Haemophilus parasuis).